We begin with the raw amino-acid sequence, 424 residues long: Formyl-CoA:oxalate CoA-transferase (424 aa).

Residues 17–18 (QS), arginine 38, 96–98 (NFA), arginine 104, and 136–139 (KVYE) contribute to the CoA site. Aspartate 168 functions as the Nucleophile in the catalytic mechanism. Position 247–249 (247–249 (GGQ)) interacts with substrate.

It belongs to the CoA-transferase III family. Frc subfamily. As to quaternary structure, homodimer.

It catalyses the reaction formyl-CoA + oxalate = oxalyl-CoA + formate. The protein operates within metabolic intermediate degradation; oxalate degradation; CO(2) and formate from oxalate: step 1/2. Involved in the catabolism of oxalate and in the adapatation to low pH via the induction of the oxalate-dependent acid tolerance response (ATR). Catalyzes the transfer of the CoA moiety from formyl-CoA to oxalate. The polypeptide is Formyl-CoA:oxalate CoA-transferase (Afipia carboxidovorans (strain ATCC 49405 / DSM 1227 / KCTC 32145 / OM5) (Oligotropha carboxidovorans)).